The chain runs to 210 residues: Small ribosomal subunit protein uS7 (210 aa).

This sequence belongs to the universal ribosomal protein uS7 family. Component of the small ribosomal subunit. Part of the small subunit (SSU) processome, composed of more than 70 proteins and the RNA chaperone small nucleolar RNA (snoRNA) U3.

Its subcellular location is the cytoplasm. It is found in the nucleus. The protein resides in the nucleolus. Component of the small ribosomal subunit. The ribosome is a large ribonucleoprotein complex responsible for the synthesis of proteins in the cell. Part of the small subunit (SSU) processome, first precursor of the small eukaryotic ribosomal subunit. During the assembly of the SSU processome in the nucleolus, many ribosome biogenesis factors, an RNA chaperone and ribosomal proteins associate with the nascent pre-rRNA and work in concert to generate RNA folding, modifications, rearrangements and cleavage as well as targeted degradation of pre-ribosomal RNA by the RNA exosome. This Caenorhabditis elegans protein is Small ribosomal subunit protein uS7 (rps-5).